The following is a 191-amino-acid chain: UPF0149 protein VS_2635 (191 aa).

It belongs to the UPF0149 family.

In Vibrio atlanticus (strain LGP32) (Vibrio splendidus (strain Mel32)), this protein is UPF0149 protein VS_2635.